The following is a 1889-amino-acid chain: E3 ubiquitin-protein ligase UBR3 (1889 aa).

The tract at residues 1–27 (MAAAAAAAAVGDPQPPQPEAPAQGLAL) is disordered. The UBR-type zinc-finger motif lies at 118 to 189 (ALCGLVWTAN…ESGFCRRHQI (72 aa)). The disordered stretch occupies residues 338 to 362 (LGQIDSSDEEDQDGSQGLGKRKRVK). Residues S343 and S344 each carry the phosphoserine modification. 2 consecutive transmembrane segments (helical) span residues 761–781 (MLEGALTFLVILLSLRLHLGM) and 919–939 (LLHCKTLHIVLFTLLYKILMD). A coiled-coil region spans residues 1167–1199 (KKITAAEKKTLDKEERRQKARERQQKLLAEFAS). S1199 carries the post-translational modification Phosphoserine. An RING-type; degenerate zinc finger spans residues 1306–1364 (DSSCLLAVSIGWEGGVYVQTCGHTLHIDCHKSYMESLRNDQVLQGFSVDKGEFTCPLCR). A helical membrane pass occupies residues 1807 to 1827 (QNCGAGTGIFLLINASVIIII).

The protein belongs to the E3 ubiquitin-protein ligase UBR1-like family. In terms of assembly, interacts with UBE2A and UBE2B. In terms of tissue distribution, expressed in numerous cells of the smell, touch, vision, hearing and taste senses. Expressed in cells of the olfactory pathway, including the olfactory cell layer of the main olfactory epithelium (MOE), a mitral neuron cell layer of the olfactory bulb (OB), and a pyramidal cell layer of the piriform cortex of the olfactory cortex (OC). Expressed in the vomeronasal sensory epithelium of the vomeronasal organ (VNO) and the mitral cells of the accessory olfactory bulb. Expressed in tactile tissues, including the dorsal root ganglion, trigeminal ganglion and follicle-sinus complexes. Expressed in cells between hair follicle and sinus and also in the region of the rete ridge collar. Expressed in taste buds of the fungiform, circumvallate, and foliate papillae. Expressed in the spiral ganglion, the organ of Corti of the cochlea in the inner ear, in the sensory epithelium of macula and vestibular ganglion of the balancing system (at protein level). Expressed in the liver and skeletal muscle.

It is found in the membrane. It carries out the reaction S-ubiquitinyl-[E2 ubiquitin-conjugating enzyme]-L-cysteine + [acceptor protein]-L-lysine = [E2 ubiquitin-conjugating enzyme]-L-cysteine + N(6)-ubiquitinyl-[acceptor protein]-L-lysine.. The protein operates within protein modification; protein ubiquitination. Its function is as follows. E3 ubiquitin-protein ligase which is a component of the N-end rule pathway. Does not bind to proteins bearing specific N-terminal residues that are destabilizing according to the N-end rule, leading to their ubiquitination and subsequent degradation. May play a role in Shh signaling by mediating the ubiquitination of Kif7. May be important for MYH9 function in certain tissues, possibly by regulating the ubiquitination of MYH9 and consequently affecting its interaction with MYO7A. This chain is E3 ubiquitin-protein ligase UBR3 (Ubr3), found in Mus musculus (Mouse).